The sequence spans 78 residues: Small integral membrane protein 1 (78 aa).

N-acetylmethionine is present on Met1. The interval Met1–Ser22 is disordered. The Cytoplasmic portion of the chain corresponds to Met1 to Gly48. 4 positions are modified to phosphoserine: Ser6, Ser17, Ser22, and Ser27. Residues Ser11 to Val21 show a composition bias toward basic and acidic residues. Residues Ile49 to Ile69 form a helical; Signal-anchor for type II membrane protein membrane-spanning segment. Over Thr70–Lys78 the chain is Extracellular.

Belongs to the SMIM1 family. Homooligomer; disulfide-linked.

The protein resides in the cell membrane. In terms of biological role, regulator of red blood cell formation. In Mus musculus (Mouse), this protein is Small integral membrane protein 1.